Reading from the N-terminus, the 398-residue chain is Cell adhesion molecule 3 (398 aa).

The signal sequence occupies residues 1 to 24 (MGAPAASLLLLLLLFACCWAPGGA). The Ig-like V-type domain occupies 25–126 (NLSQDDSQPW…VRTAKSLVTV (102 aa)). Over 25 to 330 (NLSQDDSQPW…PVPSSSSTYH (306 aa)) the chain is Extracellular. Cystine bridges form between Cys50-Cys110, Cys152-Cys209, and Cys254-Cys299. 2 consecutive Ig-like C2-type domains span residues 130-228 (PQKP…QRIE) and 233-315 (PTAM…YTLN). An N-linked (GlcNAc...) asparagine glycan is attached at Asn290. A helical transmembrane segment spans residues 331–351 (AIIGGIVAFIVFLLLIMLIFL). Over 352-398 (GHYLIRHKGTYLTHEAKGSDDAPDADTAIINAEGGQSGGDDKKEYFI) the chain is Cytoplasmic. Residues 367–398 (AKGSDDAPDADTAIINAEGGQSGGDDKKEYFI) form a disordered region. Ser388 is modified (phosphoserine).

Belongs to the nectin family. Homodimer. Can form trans-heterodimers with NECTIN3. Interacts with EPB41L1, DLG3, PALS2 and CASK. As to expression, isoform 1 is expressed mainly in adult and fetal brain. Isoform 2 is highly expressed in adult brain and weakly expressed in placenta. In brain, Isoform 2 is highly expressed in cerebellum.

It is found in the cell membrane. It localises to the cell junction. Its function is as follows. Involved in cell-cell adhesion. Has both calcium-independent homophilic cell-cell adhesion activity and calcium-independent heterophilic cell-cell adhesion activity with IGSF4, NECTIN1 and NECTIN3. Interaction with EPB41L1 may regulate structure or function of cell-cell junctions. The sequence is that of Cell adhesion molecule 3 (CADM3) from Homo sapiens (Human).